We begin with the raw amino-acid sequence, 30 residues long: Kalata-B10 (30 aa).

Residues 1-30 constitute a cross-link (cyclopeptide (Gly-Asp)); the sequence is GLPTCGETCFGGTCNTPGCSCSSWPICTRD. Intrachain disulfides connect cysteine 5-cysteine 19, cysteine 9-cysteine 21, and cysteine 14-cysteine 27.

This sequence belongs to the cyclotide family. Moebius subfamily. This peptide occurs in both cyclic and linear forms. The linear form contains unmodified Trp-24, the cyclic peptide occurs in two forms with unmodified Trp-24, and with Trp-24 oxidized to form oxindolylalanine. Oxidation is enhanced by exposure to sunlight.

Its function is as follows. Probably participates in a plant defense mechanism. In Oldenlandia affinis, this protein is Kalata-B10.